Here is a 211-residue protein sequence, read N- to C-terminus: Large ribosomal subunit protein uL3 (211 aa).

Gln-150 bears the N5-methylglutamine mark.

The protein belongs to the universal ribosomal protein uL3 family. In terms of assembly, part of the 50S ribosomal subunit. Forms a cluster with proteins L14 and L19. Post-translationally, methylated by PrmB.

One of the primary rRNA binding proteins, it binds directly near the 3'-end of the 23S rRNA, where it nucleates assembly of the 50S subunit. The chain is Large ribosomal subunit protein uL3 from Pseudomonas fluorescens (strain Pf0-1).